A 380-amino-acid chain; its full sequence is Erythronate-4-phosphate dehydrogenase (380 aa).

Residues serine 45 and threonine 66 each coordinate substrate. NAD(+)-binding positions include aspartate 146, threonine 174, 205–207, and aspartate 231; that span reads ASR. Arginine 207 is an active-site residue. Glutamate 236 is an active-site residue. Histidine 253 (proton donor) is an active-site residue. Glycine 256 is a binding site for NAD(+). Residue tyrosine 257 coordinates substrate.

This sequence belongs to the D-isomer specific 2-hydroxyacid dehydrogenase family. PdxB subfamily. Homodimer.

It localises to the cytoplasm. The catalysed reaction is 4-phospho-D-erythronate + NAD(+) = (R)-3-hydroxy-2-oxo-4-phosphooxybutanoate + NADH + H(+). It functions in the pathway cofactor biosynthesis; pyridoxine 5'-phosphate biosynthesis; pyridoxine 5'-phosphate from D-erythrose 4-phosphate: step 2/5. Functionally, catalyzes the oxidation of erythronate-4-phosphate to 3-hydroxy-2-oxo-4-phosphonooxybutanoate. In Pseudomonas putida (strain GB-1), this protein is Erythronate-4-phosphate dehydrogenase.